The primary structure comprises 325 residues: MQTSLLKPKIIAVESLGENHARVVMEPFERGYGHTLGNALRRVLLSSMVGYAPTEVTIAGVVHEYSTLDGVQEDVVNLLLNLKGVVFKLHNRDEVTVTLRKEGEGVVTAGDIELAHDCEVINPNHVIAHLSKGGKLDVQIKIEKGRGYVPGNVRRYGEDTAKIIGRIVLDASFSPVRRVSYAVESARVEQRTDLDKLVMNIETSGVITPEEAIRQSARILVDQLSVFAALEGTETAAEAPSRAPQIDPILLRPVDDLELTVRSANCLKAENIYYIGDLIQRTENELLKTPNLGRKSLNEIKEVLASRGLTLGMKLENWPPAGLDK.

Positions 1–231 (MQTSLLKPKI…DQLSVFAALE (231 aa)) are alpha N-terminal domain (alpha-NTD). The segment at 246-325 (IDPILLRPVD…ENWPPAGLDK (80 aa)) is alpha C-terminal domain (alpha-CTD).

It belongs to the RNA polymerase alpha chain family. As to quaternary structure, homodimer. The RNAP catalytic core consists of 2 alpha, 1 beta, 1 beta' and 1 omega subunit. When a sigma factor is associated with the core the holoenzyme is formed, which can initiate transcription.

The enzyme catalyses RNA(n) + a ribonucleoside 5'-triphosphate = RNA(n+1) + diphosphate. DNA-dependent RNA polymerase catalyzes the transcription of DNA into RNA using the four ribonucleoside triphosphates as substrates. The polypeptide is DNA-directed RNA polymerase subunit alpha (Burkholderia orbicola (strain MC0-3)).